The sequence spans 102 residues: Small ribosomal subunit protein uS10 (102 aa).

The protein belongs to the universal ribosomal protein uS10 family. As to quaternary structure, part of the 30S ribosomal subunit.

Its function is as follows. Involved in the binding of tRNA to the ribosomes. The chain is Small ribosomal subunit protein uS10 from Listeria innocua serovar 6a (strain ATCC BAA-680 / CLIP 11262).